The following is a 416-amino-acid chain: MAAGAVVGAWMLVLSLGGTVTGDQNITARIGKPLVLNCKGAPKKPPQQLEWKLNTGRTEAWKVLSPQGDPWDSVARVLPNGSLLLPAVGIQDEGTFRCRATSRSGKETKSNYRVRVYQIPGKPEIVDPASELMAGVPNKVGTCVSEGGYPAGTLNWLLDGKTLIPDGKGVSVKEETKRHPKTGLFTLHSELMVTPARGGALHPTFSCSFTPGLPRRRALHTAPIQLRVWSEHRGGEGPNVDAVPLKEVQLVVEPEGGAVAPGGTVTLTCEAPAQPPPQIHWIKDGRPLPLPPGPMLLLPEVGPEDQGTYSCVATHPSHGPQESRAVSVTIIETGEEGTTAGSVEGPGLETLALTLGILGGLGTVALLIGVIVWHRRRQRKGQERKVPENQEEEEEERAELNQPEEPEAAESSTGGP.

Residues 1–22 (MAAGAVVGAWMLVLSLGGTVTG) form the signal peptide. One can recognise an Ig-like V-type domain in the interval 23–115 (DQNITARIGK…KETKSNYRVR (93 aa)). At 23 to 352 (DQNITARIGK…VEGPGLETLA (330 aa)) the chain is on the extracellular side. Asparagine 25 and asparagine 80 each carry an N-linked (GlcNAc...) asparagine glycan. 2 disulfide bridges follow: cysteine 38-cysteine 98 and cysteine 143-cysteine 207. Ig-like C2-type domains lie at 123–220 (PEIV…RALH) and 238–327 (PNVD…RAVS). A helical transmembrane segment spans residues 353-373 (LTLGILGGLGTVALLIGVIVW). Topologically, residues 374-416 (HRRRQRKGQERKVPENQEEEEEERAELNQPEEPEAAESSTGGP) are cytoplasmic. The interval 377-416 (RQRKGQERKVPENQEEEEEERAELNQPEEPEAAESSTGGP) is disordered. Residues 389-408 (NQEEEEEERAELNQPEEPEA) are compositionally biased toward acidic residues.

In terms of assembly, constitutive homodimer; disulfide-linked. Forms homooligomers. Interacts with S100A1 and APP. Interacts with S100B, S100A12 and S100A14. Interacts with TIRAP. Interacts with HMGB1. Interacts with LGP2; this interaction plays an important role in AGER-mediated pro-inflammatory responses and cytokine release. Interacts with double-strand break repair protein MRE11 which is a core component of the MRN complex; the interaction enhances MRE11 endonuclease activity and promotes DNA repair. Interacts with the MCM2-7 complex via interaction with complex member MCM2; the interaction is increased following DNA replication stress and stabilizes the MCM2-7 complex at replication forks. Phosphorylated on its cytoplasmic domain by PKCzeta/PRKCZ upon ligand binding. Phosphorylated by ATM following DNA damage. Post-translationally, targeted by the ubiquitin E3 ligase subunit FBXO10 to mediate its ubiquitination and degradation. In terms of tissue distribution, endothelial cells.

It localises to the cell membrane. The protein localises to the cell projection. It is found in the phagocytic cup. Its subcellular location is the early endosome. The protein resides in the nucleus. In terms of biological role, cell surface pattern recognition receptor that senses endogenous stress signals with a broad ligand repertoire including advanced glycation end products, S100 proteins, high-mobility group box 1 protein/HMGB1, amyloid beta/APP oligomers, nucleic acids, histones, phospholipids and glycosaminoglycans. Advanced glycosylation end products are nonenzymatically glycosylated proteins which accumulate in vascular tissue in aging and at an accelerated rate in diabetes. These ligands accumulate at inflammatory sites during the pathogenesis of various diseases including diabetes, vascular complications, neurodegenerative disorders and cancers, and RAGE transduces their binding into pro-inflammatory responses. Upon ligand binding, uses TIRAP and MYD88 as adapters to transduce the signal ultimately leading to the induction of inflammatory cytokines IL6, IL8 and TNFalpha through activation of NF-kappa-B. Interaction with S100A12 on endothelium, mononuclear phagocytes, and lymphocytes triggers cellular activation, with generation of key pro-inflammatory mediators. Interaction with S100B after myocardial infarction may play a role in myocyte apoptosis by activating ERK1/2 and p53/TP53 signaling. Contributes to the translocation of amyloid-beta peptide (ABPP) across the cell membrane from the extracellular to the intracellular space in cortical neurons. ABPP-initiated RAGE signaling, especially stimulation of p38 mitogen-activated protein kinase (MAPK), has the capacity to drive a transport system delivering ABPP as a complex with RAGE to the intraneuronal space. Participates in endothelial albumin transcytosis together with HMGB1 through the RAGE/SRC/Caveolin-1 pathway, leading to endothelial hyperpermeability. Mediates the loading of HMGB1 in extracellular vesicles (EVs) that shuttle HMGB1 to hepatocytes by transferrin-mediated endocytosis and subsequently promote hepatocyte pyroptosis by activating the NLRP3 inflammasome. Binds to DNA and promotes extracellular hypomethylated DNA (CpG DNA) uptake by cells via the endosomal route to activate inflammatory responses. Mediates phagocytosis by non-professional phagocytes (NPP) and this is enhanced by binding to ligands including RNA, DNA, HMGB1 and histones. Promotes NPP-mediated phagocytosis of Saccharomyces cerevisiae spores by binding to RNA attached to the spore wall. Also promotes NPP-mediated phagocytosis of apoptotic cells. Following DNA damage, recruited to DNA double-strand break sites where it colocalizes with the MRN repair complex via interaction with double-strand break repair protein MRE11. Enhances the endonuclease activity of MRE11, promoting the end resection of damaged DNA. Promotes DNA damage repair in trophoblasts which enhances trophoblast invasion and contributes to placental development and maintenance. Protects cells from DNA replication stress by localizing to damaged replication forks where it stabilizes the MCM2-7 complex and promotes faithful progression of the replication fork. In Bos taurus (Bovine), this protein is Advanced glycosylation end product-specific receptor (AGER).